A 409-amino-acid polypeptide reads, in one-letter code: Gamma-glutamyl phosphate reductase (409 aa).

The protein belongs to the gamma-glutamyl phosphate reductase family.

Its subcellular location is the cytoplasm. The catalysed reaction is L-glutamate 5-semialdehyde + phosphate + NADP(+) = L-glutamyl 5-phosphate + NADPH + H(+). It participates in amino-acid biosynthesis; L-proline biosynthesis; L-glutamate 5-semialdehyde from L-glutamate: step 2/2. In terms of biological role, catalyzes the NADPH-dependent reduction of L-glutamate 5-phosphate into L-glutamate 5-semialdehyde and phosphate. The product spontaneously undergoes cyclization to form 1-pyrroline-5-carboxylate. In Bartonella tribocorum (strain CIP 105476 / IBS 506), this protein is Gamma-glutamyl phosphate reductase.